The chain runs to 85 residues: Small ribosomal subunit protein bS16c (85 aa).

It belongs to the bacterial ribosomal protein bS16 family.

It localises to the plastid. The protein resides in the chloroplast. The chain is Small ribosomal subunit protein bS16c from Nicotiana tabacum (Common tobacco).